Consider the following 887-residue polypeptide: DNA gyrase subunit A (887 aa).

Positions 35–501 constitute a Topo IIA-type catalytic domain; the sequence is LPDVRDGLKP…GFEDLEDEDL (467 aa). Tyr123 (O-(5'-phospho-DNA)-tyrosine intermediate) is an active-site residue. Positions 528–534 match the GyrA-box motif; the sequence is QNRGGRG. The tract at residues 811 to 865 is disordered; that stretch reads KEDAEDETNEDEQSTSTVSEDGTEQQREAVVNDETPGNAIHTEVIDSEENDEDGR. Acidic residues predominate over residues 813 to 823; sequence DAEDETNEDEQ.

It belongs to the type II topoisomerase GyrA/ParC subunit family. As to quaternary structure, heterotetramer, composed of two GyrA and two GyrB chains. In the heterotetramer, GyrA contains the active site tyrosine that forms a transient covalent intermediate with DNA, while GyrB binds cofactors and catalyzes ATP hydrolysis.

Its subcellular location is the cytoplasm. It catalyses the reaction ATP-dependent breakage, passage and rejoining of double-stranded DNA.. Functionally, a type II topoisomerase that negatively supercoils closed circular double-stranded (ds) DNA in an ATP-dependent manner to modulate DNA topology and maintain chromosomes in an underwound state. Negative supercoiling favors strand separation, and DNA replication, transcription, recombination and repair, all of which involve strand separation. Also able to catalyze the interconversion of other topological isomers of dsDNA rings, including catenanes and knotted rings. Type II topoisomerases break and join 2 DNA strands simultaneously in an ATP-dependent manner. This Staphylococcus aureus (strain MSSA476) protein is DNA gyrase subunit A.